Here is a 424-residue protein sequence, read N- to C-terminus: Type II methyltransferase M.XorII (424 aa).

The region spanning Pro-4 to Lys-367 is the SAM-dependent MTase C5-type domain. The active site involves Cys-83. Residues Arg-404–Ala-424 are disordered. A compositionally biased stretch (basic and acidic residues) spans Arg-406–Ala-424.

This sequence belongs to the class I-like SAM-binding methyltransferase superfamily. C5-methyltransferase family.

The catalysed reaction is a 2'-deoxycytidine in DNA + S-adenosyl-L-methionine = a 5-methyl-2'-deoxycytidine in DNA + S-adenosyl-L-homocysteine + H(+). In terms of biological role, a methylase that recognizes the double-stranded sequence 5'-CGATCG-3', methylates C-? on both strands and protects the DNA from cleavage by the XorII endonuclease. The chain is Type II methyltransferase M.XorII (xorIIM) from Xanthomonas oryzae pv. oryzae (strain KACC10331 / KXO85).